Consider the following 250-residue polypeptide: ATP synthase subunit a (250 aa).

6 helical membrane-spanning segments follow: residues 31 to 51 (SAYM…GMAG), 85 to 105 (FFPL…IGII), 115 to 135 (LIVT…YGLY), 144 to 164 (LFVP…IEVI), 194 to 214 (FVGM…LPLG), and 217 to 237 (VAVT…FTIL).

The protein belongs to the ATPase A chain family. As to quaternary structure, F-type ATPases have 2 components, CF(1) - the catalytic core - and CF(0) - the membrane proton channel. CF(1) has five subunits: alpha(3), beta(3), gamma(1), delta(1), epsilon(1). CF(0) has four main subunits: a, b, b' and c.

The protein resides in the cell inner membrane. Functionally, key component of the proton channel; it plays a direct role in the translocation of protons across the membrane. In Rhodopseudomonas palustris (strain BisB5), this protein is ATP synthase subunit a.